The chain runs to 441 residues: MVQVNFQVLAELDAAGRAALLRRSETDLSMFLEKVGPILEAVRTEGDAALVRFGRELDRAEGLTREGLKVTEAEFDEAFGLVEPEIVAAIRFAIGNIRTFHEEQAPEPMWLKELRPGAFAGDRFTPIRSVALYVPRGKGSFPSVTMMTSVPAVVAKVPQIAIFTPPAPDGRVDAATLVAARLAGVETVYKVGGAQAVAAAAYGTETVTPALKIVGPGSPWVVAAKRLLAGVIDPGLPAGPSESIILADETVHGGLAALDLLIEAEHGPDSSAWLVTHSRQVAEEALAALPGHWSAMTPQRVDFSQAVLCGRAGGIVLTGSAEESHAFVNDYAPEHLQILSEKPFEHLGRITEAAEVLMGPHTPITIANFCLGPNAVLPTSRGARTWGPLSVHDFLRRSSVGYVTAPAYPELAEVAKRLAEYEGFSSHANAVGPMRDAYLKR.

A Zn(2+)-binding site is contributed by His-266. Catalysis depends on proton acceptor residues Glu-334 and His-335. His-427 provides a ligand contact to Zn(2+).

Belongs to the histidinol dehydrogenase family. Requires Zn(2+) as cofactor.

This Cereibacter sphaeroides (strain ATCC 17023 / DSM 158 / JCM 6121 / CCUG 31486 / LMG 2827 / NBRC 12203 / NCIMB 8253 / ATH 2.4.1.) (Rhodobacter sphaeroides) protein is Histidinol dehydrogenase homolog.